A 534-amino-acid chain; its full sequence is Protein tweety homolog 2 (534 aa).

The Extracellular segment spans residues 1 to 44 (MATARVEYIAPWWVYWLHNLPHVDFSLQRESGDFNPKDPGYQQT). Residues 45–65 (LLFVALFIALCAAVNLLFVSG) form a helical membrane-spanning segment. Over 66–87 (YLICLCCCKKEDETETKMTSSC) the chain is Cytoplasmic. Residues 88–108 (CVTWTAAVSGLLCCAAVGIGF) traverse the membrane as a helical segment. Residues 109–213 (YGNSETNDGV…NASIIEYYRW (105 aa)) are Extracellular-facing. Residues Glu-113 and Asp-116 each contribute to the Ca(2+) site. The N-linked (GlcNAc...) asparagine glycan is linked to Asn-129. Positions 164–166 (RGD) match the RGD motif. N-linked (GlcNAc...) asparagine glycosylation is found at Asn-197 and Asn-204. The chain crosses the membrane as a helical span at residues 214-234 (LSYLILFITDVVICLVTCLGL). Residues 235-240 (AKKSKC) lie on the Cytoplasmic side of the membrane. Residues 241–261 (LLLTMLCCGLIALMLSWASLA) form a helical membrane-spanning segment. Residues 262-388 (LETSSAVGTS…IGICYDGVEG (127 aa)) lie on the Extracellular side of the membrane. Intrachain disulfides connect Cys-274–Cys-382 and Cys-300–Cys-367. N-linked (GlcNAc...) asparagine glycosylation is present at Asn-352. A helical membrane pass occupies residues 389–409 (LLYLSLFSLLAAVAFTAMVCA). At 410-534 (MPRAWKHLAA…PNIYSNVFPA (125 aa)) the chain is on the cytoplasmic side.

This sequence belongs to the tweety family. In terms of assembly, forms cis-homodimers in the presence of Ca(+2) and forms monomers and trans-dimers in the absence of Ca(2+).

It is found in the cell membrane. It carries out the reaction chloride(in) = chloride(out). It catalyses the reaction L-glutamate(out) = L-glutamate(in). Functionally, may act as a calcium-independent, swelling-dependent volume-regulated anion channel (VRAC-swell) which plays a pivotal role in the process of regulatory volume decrease (RVD) in the brain through the efflux of anions like chloride and organic osmolytes like glutamate. Probable large-conductance Ca(2+)-activated chloride channel. The chain is Protein tweety homolog 2 (ttyh2) from Xenopus laevis (African clawed frog).